We begin with the raw amino-acid sequence, 513 residues long: Zinc finger CCCH-type with G patch domain-containing protein (513 aa).

Met-1 is modified (N-acetylmethionine). Residues 90-131 (EVPVAPGAELETVPSRETGPGPTERGQEEDDGEDEEGGAALS) are disordered. The segment covering 116-126 (QEEDDGEDEEG) has biased composition (acidic residues). The C3H1-type zinc-finger motif lies at 176–202 (KSLKPCSFFLEGKCRFQENCRFSHGQV). The interval 267 to 296 (LPPLRTEPAGSSDSDGSDADDPSYARVVEP) is disordered. Residues Ser-278 and Ser-355 each carry the phosphoserine modification. Residues 315-361 (TRGIGSRLLAKMGYEFGKGLGRHAEGRVEPVHAVVLPRGKSLDQCAE) form the G-patch domain. Disordered stretches follow at residues 367 to 394 (TRAG…PPPR) and 492 to 513 (AQEA…MTEF). The segment covering 497 to 513 (LQREQRKADTHKKMTEF) has biased composition (basic and acidic residues).

In terms of assembly, interacts with CHD4/Mi-2; the interaction is direct.

The protein localises to the nucleus. In terms of biological role, transcription repressor that specifically binds the 5'-GGAG[GA]A[GA]A-3' consensus sequence. Represses transcription by recruiting the chromatin multiprotein complex NuRD to target promoters. Negatively regulates expression of EGFR, a gene involved in cell proliferation, survival and migration. Its ability to repress genes of the EGFR pathway suggest it may act as a tumor suppressor. This chain is Zinc finger CCCH-type with G patch domain-containing protein (ZGPAT), found in Bos taurus (Bovine).